We begin with the raw amino-acid sequence, 81 residues long: Photosystem I iron-sulfur center (81 aa).

4Fe-4S ferredoxin-type domains are found at residues 2-31 (VHVV…MVPW) and 39-68 (IASS…IRVY). Cys11, Cys14, Cys17, Cys21, Cys48, Cys51, Cys54, and Cys58 together coordinate [4Fe-4S] cluster.

In terms of assembly, the eukaryotic PSI reaction center is composed of at least 11 subunits. It depends on [4Fe-4S] cluster as a cofactor.

Its subcellular location is the plastid. The protein resides in the chloroplast thylakoid membrane. The catalysed reaction is reduced [plastocyanin] + hnu + oxidized [2Fe-2S]-[ferredoxin] = oxidized [plastocyanin] + reduced [2Fe-2S]-[ferredoxin]. In terms of biological role, apoprotein for the two 4Fe-4S centers FA and FB of photosystem I (PSI); essential for photochemical activity. FB is the terminal electron acceptor of PSI, donating electrons to ferredoxin. The C-terminus interacts with PsaA/B/D and helps assemble the protein into the PSI complex. Required for binding of PsaD and PsaE to PSI. PSI is a plastocyanin/cytochrome c6-ferredoxin oxidoreductase, converting photonic excitation into a charge separation, which transfers an electron from the donor P700 chlorophyll pair to the spectroscopically characterized acceptors A0, A1, FX, FA and FB in turn. This chain is Photosystem I iron-sulfur center, found in Cyanidium caldarium (Red alga).